Consider the following 392-residue polypeptide: THO complex subunit MFT1 (392 aa).

2 stretches are compositionally biased toward acidic residues: residues 258–271 (DNID…EDEE) and 290–330 (NVDE…EVDG). A disordered region spans residues 258–392 (DNIDEDYESD…SASSSVEEVK (135 aa)). Serine 266 is subject to Phosphoserine. Polar residues predominate over residues 331–344 (ESSQQEDNSRQGNN). A compositionally biased stretch (acidic residues) spans 345–367 (EETDKETGVIEEPDAVNDAEEAD). Polar residues predominate over residues 377–392 (GTTSDFSASSSVEEVK).

In terms of assembly, component of the THO complex, which is composed of HPR1, MFT1, THO2 and THP2. Together with SUB2, TEX1 and YRA1, THO forms the transcription/export (TREX) complex. THO associates with DNA and RNA in vitro.

The protein localises to the nucleus. In terms of biological role, component the THO subcomplex of the TREX complex, which operates in coupling transcription elongation to mRNA export. The THO complex is recruited to transcribed genes and moves along the gene with the elongating polymerase during transcription. THO is important for stabilizing nascent RNA in the RNA polymerase II elongation complex by preventing formation of DNA:RNA hybrids behind the elongating polymerase. It functions in cotranscriptional formation of an export-competent messenger ribonucleoprotein particle (mRNP) by facilitating the loading of ATP-dependent RNA helicase SUB2 and the mRNA export factor YRA1 along the nascent mRNA. This Saccharomyces cerevisiae (strain ATCC 204508 / S288c) (Baker's yeast) protein is THO complex subunit MFT1 (MFT1).